Consider the following 231-residue polypeptide: tRNA (guanine-N(1)-)-methyltransferase (231 aa).

Gly112 serves as a coordination point for S-adenosyl-L-methionine.

The protein belongs to the RNA methyltransferase TrmD family. As to quaternary structure, homodimer.

The protein resides in the cytoplasm. The catalysed reaction is guanosine(37) in tRNA + S-adenosyl-L-methionine = N(1)-methylguanosine(37) in tRNA + S-adenosyl-L-homocysteine + H(+). In terms of biological role, specifically methylates guanosine-37 in various tRNAs. In Chlorobium chlorochromatii (strain CaD3), this protein is tRNA (guanine-N(1)-)-methyltransferase.